The primary structure comprises 345 residues: N-glycosylase/DNA lyase (345 aa).

Residues asparagine 149, arginine 154, and arginine 204 each coordinate DNA. The Schiff-base intermediate with DNA role is filled by lysine 249. Proline 266 and aspartate 268 together coordinate 8-oxoguanine. Positions 270 and 287 each coordinate DNA. 8-oxoguanine-binding residues include glutamine 315 and phenylalanine 319. The segment covering 324 to 334 (RQSRHAQEPPA) has biased composition (basic and acidic residues). Residues 324–345 (RQSRHAQEPPAKRRKGSKGPEG) form a disordered region. A compositionally biased stretch (basic residues) spans 335 to 345 (KRRKGSKGPEG).

This sequence belongs to the type-1 OGG1 family. In terms of tissue distribution, ubiquitous.

It is found in the nucleus. It localises to the nucleoplasm. The protein localises to the nucleus speckle. Its subcellular location is the nucleus matrix. The protein resides in the mitochondrion. It carries out the reaction 2'-deoxyribonucleotide-(2'-deoxyribose 5'-phosphate)-2'-deoxyribonucleotide-DNA = a 3'-end 2'-deoxyribonucleotide-(2,3-dehydro-2,3-deoxyribose 5'-phosphate)-DNA + a 5'-end 5'-phospho-2'-deoxyribonucleoside-DNA + H(+). DNA repair enzyme that incises DNA at 8-oxoG residues. Excises 7,8-dihydro-8-oxoguanine and 2,6-diamino-4-hydroxy-5-N-methylformamidopyrimidine (FAPY) from damaged DNA. Has a beta-lyase activity that nicks DNA 3' to the lesion. The chain is N-glycosylase/DNA lyase (OGG1) from Homo sapiens (Human).